We begin with the raw amino-acid sequence, 275 residues long: Integrase homolog (275 aa).

A compositionally biased stretch (basic and acidic residues) spans 88 to 111 (RVSQDRQAQGRERRSVLLPQERRG). The disordered stretch occupies residues 88–120 (RVSQDRQAQGRERRSVLLPQERRGSSGRQPLYS).

It belongs to the 'phage' integrase family.

Functionally, integrase-recombinase proteins are responsible for catalyzing strand exchange between DNA molecules and play an important role in the DNA replication. In terms of biological role, may be required for the formation of concatameric complex replicative intermediates and/or their resolution before encapsidation. The polypeptide is Integrase homolog (INT) (Dryophytes versicolor (chameleon treefrog)).